The chain runs to 348 residues: Protein RecA (348 aa).

Position 67 to 74 (67 to 74 (GPESSGKT)) interacts with ATP.

The protein belongs to the RecA family.

Its subcellular location is the cytoplasm. Its function is as follows. Can catalyze the hydrolysis of ATP in the presence of single-stranded DNA, the ATP-dependent uptake of single-stranded DNA by duplex DNA, and the ATP-dependent hybridization of homologous single-stranded DNAs. It interacts with LexA causing its activation and leading to its autocatalytic cleavage. The protein is Protein RecA of Clostridioides difficile (strain 630) (Peptoclostridium difficile).